The primary structure comprises 258 residues: uncharacterized protein (258 aa).

Residues 16-148 (EAFDSFEYAE…VLRALNFDTH (133 aa)) enclose the Cyclin N-terminal domain.

Belongs to the cyclin family. Cyclin L subfamily.

Its subcellular location is the cytoplasm. The protein resides in the nucleus. This is an uncharacterized protein from Schizosaccharomyces pombe (strain 972 / ATCC 24843) (Fission yeast).